Here is a 194-residue protein sequence, read N- to C-terminus: Large ribosomal subunit protein bL9 (194 aa).

Belongs to the bacterial ribosomal protein bL9 family.

In terms of biological role, binds to the 23S rRNA. The sequence is that of Large ribosomal subunit protein bL9 from Paracoccus denitrificans (strain Pd 1222).